Consider the following 118-residue polypeptide: Protein TusC (118 aa).

This sequence belongs to the DsrF/TusC family. In terms of assembly, heterohexamer, formed by a dimer of trimers. The hexameric TusBCD complex contains 2 copies each of TusB, TusC and TusD. The TusBCD complex interacts with TusE.

The protein resides in the cytoplasm. Part of a sulfur-relay system required for 2-thiolation of 5-methylaminomethyl-2-thiouridine (mnm(5)s(2)U) at tRNA wobble positions. The chain is Protein TusC from Salmonella agona (strain SL483).